The following is a 259-amino-acid chain: Phosphonates import ATP-binding protein PhnC (259 aa).

An ABC transporter domain is found at 4–245 (ISIQSVTKRF…ALRTIYQREG (242 aa)). ATP is bound at residue 37–44 (GPSGAGKS).

The protein belongs to the ABC transporter superfamily. Phosphonates importer (TC 3.A.1.9.1) family. As to quaternary structure, the complex is composed of two ATP-binding proteins (PhnC), two transmembrane proteins (PhnE) and a solute-binding protein (PhnD).

The protein localises to the cell inner membrane. It carries out the reaction phosphonate(out) + ATP + H2O = phosphonate(in) + ADP + phosphate + H(+). Its function is as follows. Part of the ABC transporter complex PhnCDE involved in phosphonates import. Responsible for energy coupling to the transport system. The polypeptide is Phosphonates import ATP-binding protein PhnC (Thiobacillus denitrificans (strain ATCC 25259 / T1)).